Consider the following 217-residue polypeptide: MRLILLGAPGAGKGTQAAFICRKYGIPQISTGDMLRAAVKAGTEMGLAAKKVMDAGGLVSDDIIIGLVKERILQDDCANGFLFDGFPRTIPQAEAMKAAGVKLDLVLEIDVPSEAIIERMSGRRSHPASGRTYHVKFNPPKVDGVDDVTGEPLVQRDDDKEETVRKRLEVYQAQTRPLVDYYSAWAATGDAAAPRYAKIEGLGTVEEITARALAALG.

10-15 (GAGKGT) provides a ligand contact to ATP. Residues 30–59 (STGDMLRAAVKAGTEMGLAAKKVMDAGGLV) form an NMP region. AMP is bound by residues Thr-31, Arg-36, 57 to 59 (GLV), 85 to 88 (GFPR), and Gln-92. The LID stretch occupies residues 122–159 (GRRSHPASGRTYHVKFNPPKVDGVDDVTGEPLVQRDDD). Residues Arg-123 and 132–133 (TY) contribute to the ATP site. The AMP site is built by Arg-156 and Arg-167. ATP is bound at residue Gly-203.

Belongs to the adenylate kinase family. As to quaternary structure, monomer.

The protein resides in the cytoplasm. The catalysed reaction is AMP + ATP = 2 ADP. Its pathway is purine metabolism; AMP biosynthesis via salvage pathway; AMP from ADP: step 1/1. In terms of biological role, catalyzes the reversible transfer of the terminal phosphate group between ATP and AMP. Plays an important role in cellular energy homeostasis and in adenine nucleotide metabolism. The protein is Adenylate kinase of Leptothrix cholodnii (strain ATCC 51168 / LMG 8142 / SP-6) (Leptothrix discophora (strain SP-6)).